A 167-amino-acid chain; its full sequence is Ubiquitin-fold modifier-conjugating enzyme 1 (167 aa).

C116 acts as the Glycyl thioester intermediate in catalysis.

It belongs to the ubiquitin-conjugating enzyme family. UFC1 subfamily. As to quaternary structure, interacts with UBA5 (via C-terminus). Interacts with UFL1. Interacts with UFM1.

Its function is as follows. E2-like enzyme which specifically catalyzes the second step in ufmylation. Accepts the ubiquitin-like modifier UFM1 from the E1 enzyme UBA5 and forms an intermediate with UFM1 via a thioester linkage. Ufmylation is involved in various processes, such as ribosome recycling, response to DNA damage, interferon response or reticulophagy (also called ER-phagy). This Salmo salar (Atlantic salmon) protein is Ubiquitin-fold modifier-conjugating enzyme 1.